The primary structure comprises 151 residues: Small ribosomal subunit protein uS13 (151 aa).

This sequence belongs to the universal ribosomal protein uS13 family. Part of the 30S ribosomal subunit. Forms a loose heterodimer with protein S19. Forms two bridges to the 50S subunit in the 70S ribosome.

Its function is as follows. Located at the top of the head of the 30S subunit, it contacts several helices of the 16S rRNA. In the 70S ribosome it contacts the 23S rRNA (bridge B1a) and protein L5 of the 50S subunit (bridge B1b), connecting the 2 subunits; these bridges are implicated in subunit movement. The sequence is that of Small ribosomal subunit protein uS13 from Hyperthermus butylicus (strain DSM 5456 / JCM 9403 / PLM1-5).